A 390-amino-acid polypeptide reads, in one-letter code: Probable tRNA pseudouridine synthase D (390 aa).

Residue aspartate 93 is the Nucleophile of the active site. The region spanning 166–353 is the TRUD domain; sequence YVLNYYGIQR…YGTRRKMITP (188 aa).

The protein belongs to the pseudouridine synthase TruD family.

The enzyme catalyses uridine(13) in tRNA = pseudouridine(13) in tRNA. Its function is as follows. Could be responsible for synthesis of pseudouridine from uracil-13 in transfer RNAs. The sequence is that of Probable tRNA pseudouridine synthase D from Methanococcus maripaludis (strain C5 / ATCC BAA-1333).